The following is a 727-amino-acid chain: Anaphase-promoting complex subunit 5 (727 aa).

Ser-180 is modified (phosphoserine). TPR repeat units follow at residues 194-234, 235-285, 286-322, 323-359, 360-390, 391-438, 439-472, 473-512, 513-552, 553-592, 593-632, 633-668, and 669-708; these read QKQA…FNPD, FAEA…GRSL, RYAA…SNDH, VCLQ…FGLP, RAFA…SELI, DISI…TESF, AVAL…FPPN, SQHA…ALNG, IEGV…TEMV, ISVL…QYLA, SETV…ILDK, GRAM…NLTE, and AKNY…CAMV. Thr-217 bears the Phosphothreonine mark.

It belongs to the APC5 family. As to quaternary structure, the mammalian APC/C is composed at least of 14 distinct subunits ANAPC1, ANAPC2, CDC27/APC3, ANAPC4, ANAPC5, CDC16/APC6, ANAPC7, CDC23/APC8, ANAPC10, ANAPC11, CDC26/APC12, ANAPC13, ANAPC15 and ANAPC16 that assemble into a complex of at least 19 chains with a combined molecular mass of around 1.2 MDa; APC/C interacts with FZR1 and FBXO5.

The protein resides in the nucleus. It localises to the cytoplasm. The protein localises to the cytoskeleton. Its subcellular location is the spindle. The protein operates within protein modification; protein ubiquitination. Component of the anaphase promoting complex/cyclosome (APC/C), a cell cycle-regulated E3 ubiquitin ligase that controls progression through mitosis and the G1 phase of the cell cycle. The APC/C complex acts by mediating ubiquitination and subsequent degradation of target proteins: it mainly mediates the formation of 'Lys-11'-linked polyubiquitin chains and, to a lower extent, the formation of 'Lys-48'- and 'Lys-63'-linked polyubiquitin chains. The APC/C complex catalyzes assembly of branched 'Lys-11'-/'Lys-48'-linked branched ubiquitin chains on target proteins. This is Anaphase-promoting complex subunit 5 (Anapc5) from Rattus norvegicus (Rat).